The sequence spans 148 residues: Glutamyl-tRNA(Gln) amidotransferase subunit C, mitochondrial (148 aa).

This sequence belongs to the GatC family. As to quaternary structure, subunit of the heterotrimeric GatCAB amidotransferase (AdT) complex, composed of A, B and C subunits.

The protein localises to the mitochondrion. The catalysed reaction is L-glutamyl-tRNA(Gln) + L-glutamine + ATP + H2O = L-glutaminyl-tRNA(Gln) + L-glutamate + ADP + phosphate + H(+). Functionally, allows the formation of correctly charged Gln-tRNA(Gln) through the transamidation of misacylated Glu-tRNA(Gln) in the mitochondria. The reaction takes place in the presence of glutamine and ATP through an activated gamma-phospho-Glu-tRNA(Gln). In Drosophila melanogaster (Fruit fly), this protein is Glutamyl-tRNA(Gln) amidotransferase subunit C, mitochondrial.